Here is a 774-residue protein sequence, read N- to C-terminus: MSLLLTIAKEYKRLCQDAKAAQMMTVGTVSNYTTFKKWTTSRKEKNPSLRMRWAMSSKFPIIANKRMLEEAQIPKEHNNVALWEDTEDVSKRDHVLASASCINYWNFCGPCVNNSEVIKEVYKSRFGRLERRKEIMWKELRFTLVDRQRRRVDTQPVEQRLRTGEIKDLQMWTLFEDEAPLASKFILDNYGLVKEMRSKFANKPLNKEVVAHMLEKQFNPESRFLPVFGAIRPERMELIHALGGETWIQEANTAGISNVDQRKNDIRAVCRKVCLAANASIMNAKSKLVEYIKSTSMRIGETERKLEELILETDDVSPEVTLCKSALGGQLGKTLSFGPMLLKKISGSGVKVKDTVYIQGVRAVQFEYWSEQEEFYGEYKSATALFSRKERSLEWITIGGGINEDRKRLLAMCMIFCRDGDYFKDAPATITMADLSTKLGREIPYQYVMMNWIQKSEDNLEALLYSRGIVETNPGKMGSSMGIDGSKRAIKSLRAVTIQSGKIDMPESKEKIHLELSDNLEAFDSSGRIVATILDLPSDKKVTFQDVSFQHPDLAVLRDEKTAITKGYEALIKRLGTGDNDIPSLIAKKDYLSLYNLPEVKLMAPLIRPNRKGVYSRVARKLVSTQVTTGHYSLHELIKVLPFTYFAPKQGMFEGRLFFSNDSFVEPGVNNNVFSWSKADSSKIYCHGIAIRVPLVVGDEHMDTSLALLEGFSVCENDPRAPMVTRQDLIDVGFGQKVRLFVGQGSVRTFKRTASQRAASSDVNKNVKKIKMSN.

It belongs to the influenza viruses PB2 family. Influenza RNA polymerase is composed of three subunits: PB1, PB2 and PA. Interacts (via N-terminus) with PB1 (via C-terminus). Interacts with nucleoprotein NP (via N-terminus). Interacts with host ANP32A (via C-terminus); this interaction promotes viral RNA synthesis.

The protein resides in the virion. It is found in the host nucleus. In terms of biological role, plays an essential role in transcription initiation and cap-stealing mechanism, in which cellular capped pre-mRNAs are used to generate primers for viral transcription. Recognizes and binds a wide range of cap structures of target pre-RNAs which are subsequently cleaved after 10-13 nucleotides by the viral protein PA. Plays a role in the initiation of the viral genome replication and modulates the activity of the ribonucleoprotein (RNP) complex. This Influenza C virus (strain C/Johannesburg/1/1966) protein is Polymerase basic protein 2.